A 346-amino-acid polypeptide reads, in one-letter code: Glucose-6-phosphatase 3 (346 aa).

Residues Met1–Asn24 lie on the Lumenal side of the membrane. The chain crosses the membrane as a helical span at residues Met25–Ala45. Residues Ala46–Ser56 are Cytoplasmic-facing. A helical transmembrane segment spans residues Val57–Gly77. The Lumenal portion of the chain corresponds to Asp78–Pro108. Arg79 is a substrate binding site. The helical transmembrane segment at Gly109–Ile129 threads the bilayer. His114 acts as the Proton donor in catalysis. The Cytoplasmic segment spans residues Ser130–Arg138. The chain crosses the membrane as a helical span at residues Ser139–Leu159. Residues Ser160–His167 lie on the Lumenal side of the membrane. Arg161 lines the substrate pocket. The Nucleophile role is filled by His167. The chain crosses the membrane as a helical span at residues Phe168 to Met186. The Cytoplasmic segment spans residues Ser187–Ser197. The helical transmembrane segment at Phe198–Phe218 threads the bilayer. The Lumenal portion of the chain corresponds to Thr219–Asp254. The chain crosses the membrane as a helical span at residues Ser255–Ile273. Residues Arg274–Lys283 are Cytoplasmic-facing. The helical transmembrane segment at Ile284 to Pro304 threads the bilayer. The Lumenal portion of the chain corresponds to Gln305–Ser307. The chain crosses the membrane as a helical span at residues Leu308–Val328. Over Pro329–Ser346 the chain is Cytoplasmic.

This sequence belongs to the glucose-6-phosphatase family. Widely expressed. Highly expressed in heart and testis and to a lower extent in spleen, stomach, small intestine, skeletal muscle and uterus. Expressed in muscle, brain, thymus, lung, kidney, spleen and pancreas (at protein level). In the brain, expressed in astrocytes (at protein level).

It is found in the endoplasmic reticulum membrane. The enzyme catalyses D-glucose 6-phosphate + H2O = D-glucose + phosphate. It participates in carbohydrate biosynthesis; gluconeogenesis. Inhibited by vanadate. Its function is as follows. Hydrolyzes glucose-6-phosphate to glucose in the endoplasmic reticulum. May form with the glucose-6-phosphate transporter (SLC37A4/G6PT) a ubiquitously expressed complex responsible for glucose production through glycogenolysis and gluconeogenesis. Probably required for normal neutrophil function. In Mus musculus (Mouse), this protein is Glucose-6-phosphatase 3 (G6pc3).